We begin with the raw amino-acid sequence, 332 residues long: Abl interactor homolog (332 aa).

Positions 73 to 104 form a coiled coil; it reads HITSLLQLQTNEMEKLNIEIQTLTQRVRMIHD. Residues 152–332 are disordered; the sequence is SDINQNGVPP…NDFPPPPPPM (181 aa). Residues 164 to 206 show a composition bias toward low complexity; that stretch reads NHSNSSANLTSSSGHLAASSTSNSSTPSYQSPSYSSQPTISSG. Over residues 221 to 247 the composition is skewed to pro residues; it reads APPPPSLSVPAAPPPPVMNVPPPPPTS. Positions 248-257 are enriched in polar residues; sequence QRPSSVNNNA. Over residues 277-314 the composition is skewed to pro residues; the sequence is LPPPPSFGLPPPPTLGDDFPPPPPPPVGSYDFPPPPAR.

Belongs to the ABI family. Part of a Scar/WAVE complex containing brk1, scrA, abiA, pirA and napA. Interacts with scrA.

Functionally, involved in regulation of actin and microtubule organization. Required for proper cytokinesis. This chain is Abl interactor homolog (abiA), found in Dictyostelium discoideum (Social amoeba).